Consider the following 404-residue polypeptide: Serine/threonine transporter SstT (404 aa).

8 helical membrane-spanning segments follow: residues Ile-17–Phe-37, Ile-39–Leu-59, Met-75–Leu-95, Ala-138–Leu-158, Ile-179–Ile-199, Phe-212–Ile-232, Ile-287–Leu-307, and Phe-313–Ala-333.

Belongs to the dicarboxylate/amino acid:cation symporter (DAACS) (TC 2.A.23) family.

The protein localises to the cell membrane. The catalysed reaction is L-serine(in) + Na(+)(in) = L-serine(out) + Na(+)(out). It catalyses the reaction L-threonine(in) + Na(+)(in) = L-threonine(out) + Na(+)(out). In terms of biological role, involved in the import of serine and threonine into the cell, with the concomitant import of sodium (symport system). In Streptococcus pyogenes serotype M1, this protein is Serine/threonine transporter SstT.